We begin with the raw amino-acid sequence, 885 residues long: Alanine--tRNA ligase (885 aa).

4 residues coordinate Zn(2+): H571, H575, C674, and H678.

The protein belongs to the class-II aminoacyl-tRNA synthetase family. It depends on Zn(2+) as a cofactor.

Its subcellular location is the cytoplasm. The catalysed reaction is tRNA(Ala) + L-alanine + ATP = L-alanyl-tRNA(Ala) + AMP + diphosphate. Functionally, catalyzes the attachment of alanine to tRNA(Ala) in a two-step reaction: alanine is first activated by ATP to form Ala-AMP and then transferred to the acceptor end of tRNA(Ala). Also edits incorrectly charged Ser-tRNA(Ala) and Gly-tRNA(Ala) via its editing domain. The polypeptide is Alanine--tRNA ligase (Clavibacter sepedonicus (Clavibacter michiganensis subsp. sepedonicus)).